We begin with the raw amino-acid sequence, 152 residues long: D-aminoacyl-tRNA deacylase (152 aa).

Positions 142 to 143 (GP) match the Gly-cisPro motif, important for rejection of L-amino acids motif.

This sequence belongs to the DTD family. In terms of assembly, homodimer.

Its subcellular location is the cytoplasm. The enzyme catalyses glycyl-tRNA(Ala) + H2O = tRNA(Ala) + glycine + H(+). It catalyses the reaction a D-aminoacyl-tRNA + H2O = a tRNA + a D-alpha-amino acid + H(+). Functionally, an aminoacyl-tRNA editing enzyme that deacylates mischarged D-aminoacyl-tRNAs. Also deacylates mischarged glycyl-tRNA(Ala), protecting cells against glycine mischarging by AlaRS. Acts via tRNA-based rather than protein-based catalysis; rejects L-amino acids rather than detecting D-amino acids in the active site. By recycling D-aminoacyl-tRNA to D-amino acids and free tRNA molecules, this enzyme counteracts the toxicity associated with the formation of D-aminoacyl-tRNA entities in vivo and helps enforce protein L-homochirality. The chain is D-aminoacyl-tRNA deacylase from Burkholderia multivorans (strain ATCC 17616 / 249).